The following is a 168-amino-acid chain: Photosystem I assembly protein Ycf3 (168 aa).

3 TPR repeats span residues A35–P68, S72–L105, and G120–N153.

It belongs to the Ycf3 family.

It localises to the plastid. The protein localises to the chloroplast thylakoid membrane. Its function is as follows. Essential for the assembly of the photosystem I (PSI) complex. May act as a chaperone-like factor to guide the assembly of the PSI subunits. The sequence is that of Photosystem I assembly protein Ycf3 from Acorus calamus var. americanus (American sweet flag).